The following is a 344-amino-acid chain: uncharacterized protein (344 aa).

Residues 1-20 (MEIRIMLFILMMMVMPVSYA) form the signal peptide.

It belongs to the fimbrial protein family.

Part of the yehABCD fimbrial operon. Could contribute to adhesion to various surfaces in specific environmental niches. This is an uncharacterized protein from Escherichia coli (strain K12).